A 355-amino-acid polypeptide reads, in one-letter code: tRNA N6-adenosine threonylcarbamoyltransferase (355 aa).

Histidine 110 and histidine 114 together coordinate Fe cation. Substrate-binding positions include 132 to 136, aspartate 165, glycine 178, aspartate 182, and asparagine 288; that span reads LVSGG. Position 316 (aspartate 316) interacts with Fe cation.

The protein belongs to the KAE1 / TsaD family. Fe(2+) is required as a cofactor.

It localises to the cytoplasm. It carries out the reaction L-threonylcarbamoyladenylate + adenosine(37) in tRNA = N(6)-L-threonylcarbamoyladenosine(37) in tRNA + AMP + H(+). Required for the formation of a threonylcarbamoyl group on adenosine at position 37 (t(6)A37) in tRNAs that read codons beginning with adenine. Is involved in the transfer of the threonylcarbamoyl moiety of threonylcarbamoyl-AMP (TC-AMP) to the N6 group of A37, together with TsaE and TsaB. TsaD likely plays a direct catalytic role in this reaction. This is tRNA N6-adenosine threonylcarbamoyltransferase from Lawsonia intracellularis (strain PHE/MN1-00).